A 176-amino-acid polypeptide reads, in one-letter code: ATP synthase subunit b, chloroplastic (176 aa).

The chain crosses the membrane as a helical span at residues 27–49; that stretch reads ILNLAAVFALLAYVGTDFVSSLL.

It belongs to the ATPase B chain family. As to quaternary structure, F-type ATPases have 2 components, F(1) - the catalytic core - and F(0) - the membrane proton channel. F(1) has five subunits: alpha(3), beta(3), gamma(1), delta(1), epsilon(1). F(0) has four main subunits: a(1), b(1), b'(1) and c(10-14). The alpha and beta chains form an alternating ring which encloses part of the gamma chain. F(1) is attached to F(0) by a central stalk formed by the gamma and epsilon chains, while a peripheral stalk is formed by the delta, b and b' chains.

It is found in the plastid. It localises to the chloroplast thylakoid membrane. Functionally, f(1)F(0) ATP synthase produces ATP from ADP in the presence of a proton or sodium gradient. F-type ATPases consist of two structural domains, F(1) containing the extramembraneous catalytic core and F(0) containing the membrane proton channel, linked together by a central stalk and a peripheral stalk. During catalysis, ATP synthesis in the catalytic domain of F(1) is coupled via a rotary mechanism of the central stalk subunits to proton translocation. Component of the F(0) channel, it forms part of the peripheral stalk, linking F(1) to F(0). The chain is ATP synthase subunit b, chloroplastic from Nephroselmis olivacea (Green alga).